We begin with the raw amino-acid sequence, 393 residues long: Protein TsgA (393 aa).

Over 1 to 10 the chain is Cytoplasmic; the sequence is MTNSNRIKLT. A helical transmembrane segment spans residues 11 to 31; the sequence is WISFLSYALTGALVIVTGMVM. Residues 32–50 are Periplasmic-facing; sequence GNIADYFHLPVSSMSNTFT. Residues 51 to 71 traverse the membrane as a helical segment; it reads FLNAGILISIFLNAWLMEIVP. Residues 72 to 77 are Cytoplasmic-facing; it reads LKTQLR. The helical transmembrane segment at 78–98 threads the bilayer; it reads FGFILMVLAVAGLMFSHSLAL. The Periplasmic portion of the chain corresponds to 99-100; sequence FS. A helical transmembrane segment spans residues 101–121; sequence AAMFVLGLVSGITMSIGTFLI. Residues 122 to 133 lie on the Cytoplasmic side of the membrane; sequence TQLYEGRQRGSR. Residues 134–154 traverse the membrane as a helical segment; it reads LLFTDSFFSMAGMIFPMVAAF. The Periplasmic segment spans residues 155-161; that stretch reads LLARSIE. A helical membrane pass occupies residues 162–182; that stretch reads WYWVYACIGLVYLAIFILTFG. Residues 183-205 lie on the Cytoplasmic side of the membrane; that stretch reads CEFPALGKHAQHSQAPVVKEKWG. Residues 206–226 traverse the membrane as a helical segment; it reads IGVLFLAVAALCYILGQLGFI. At 227 to 244 the chain is on the periplasmic side; sequence SWVPEYAKGLGMSLNDAG. Residues 245–265 traverse the membrane as a helical segment; sequence ALVSDFWMSYMFGMWAFSFIL. Residues 266–272 are Cytoplasmic-facing; that stretch reads RFFDLQR. Residues 273–293 traverse the membrane as a helical segment; that stretch reads ILTVLAGMAAVLMYLFITGTQ. The Periplasmic portion of the chain corresponds to 294–297; it reads AHMP. The helical transmembrane segment at 298–318 threads the bilayer; that stretch reads WFILTLGFFSSAIYTSIITLG. The Cytoplasmic segment spans residues 319–331; it reads SQQTKVASPKLVN. Residues 332 to 352 traverse the membrane as a helical segment; that stretch reads FILTCGTIGTMLTFVVTGPIV. At 353–360 the chain is on the periplasmic side; it reads AHSGPQAA. A helical membrane pass occupies residues 361–381; sequence LLTANGLYAVVFVMCFALGFV. Topologically, residues 382 to 393 are cytoplasmic; it reads SRHRQHSSPAAH.

The protein belongs to the major facilitator superfamily. TsgA family.

The protein resides in the cell inner membrane. The sequence is that of Protein TsgA from Salmonella paratyphi A (strain ATCC 9150 / SARB42).